The following is a 178-amino-acid chain: dCTP deaminase (178 aa).

Residues 99–104 and aspartate 115 each bind dCTP; that span reads RSTWAR. Residue glutamate 125 is the Proton donor/acceptor of the active site. Positions 157 and 164 each coordinate dCTP.

The protein belongs to the dCTP deaminase family. Homotrimer.

The enzyme catalyses dCTP + H2O + H(+) = dUTP + NH4(+). The protein operates within pyrimidine metabolism; dUMP biosynthesis; dUMP from dCTP (dUTP route): step 1/2. Catalyzes the deamination of dCTP to dUTP. This Aeropyrum pernix (strain ATCC 700893 / DSM 11879 / JCM 9820 / NBRC 100138 / K1) protein is dCTP deaminase.